Reading from the N-terminus, the 149-residue chain is MKFLLINGPNLNLLGQREPLIYGSETLEKIELNLKKKAKLLGVELECFQSNSEGTLVDCIQQALGKVDAILINAGAYTHTSVALRDALLSTGIPYVELHLSNTHSRESFRQKSLLADRAIGIVSGFGAMSYSLALDGALDFLKSQKSGV.

Catalysis depends on Tyr22, which acts as the Proton acceptor. Positions 73, 79, and 86 each coordinate substrate. Catalysis depends on His99, which acts as the Proton donor. Substrate-binding positions include 100-101 (LS) and Arg110.

Belongs to the type-II 3-dehydroquinase family. In terms of assembly, homododecamer.

It carries out the reaction 3-dehydroquinate = 3-dehydroshikimate + H2O. Its pathway is metabolic intermediate biosynthesis; chorismate biosynthesis; chorismate from D-erythrose 4-phosphate and phosphoenolpyruvate: step 3/7. Its function is as follows. Catalyzes a trans-dehydration via an enolate intermediate. This Prochlorococcus marinus (strain SARG / CCMP1375 / SS120) protein is 3-dehydroquinate dehydratase.